A 266-amino-acid chain; its full sequence is Type III pantothenate kinase (266 aa).

15–22 (EIGNSSTS) is a binding site for ATP. Substrate-binding positions include Tyr105 and 112–115 (GADR). Asp114 functions as the Proton acceptor in the catalytic mechanism. K(+) is bound at residue Asp135. Thr138 serves as a coordination point for ATP. A substrate-binding site is contributed by Thr191.

It belongs to the type III pantothenate kinase family. As to quaternary structure, homodimer. It depends on NH4(+) as a cofactor. K(+) serves as cofactor.

The protein localises to the cytoplasm. It catalyses the reaction (R)-pantothenate + ATP = (R)-4'-phosphopantothenate + ADP + H(+). Its pathway is cofactor biosynthesis; coenzyme A biosynthesis; CoA from (R)-pantothenate: step 1/5. In terms of biological role, catalyzes the phosphorylation of pantothenate (Pan), the first step in CoA biosynthesis. This is Type III pantothenate kinase from Chlorobium chlorochromatii (strain CaD3).